The chain runs to 932 residues: Isoleucine--tRNA ligase (932 aa).

A 'HIGH' region motif is present at residues proline 57–histidine 67. Glutamate 552 provides a ligand contact to L-isoleucyl-5'-AMP. The short motif at lysine 593 to serine 597 is the 'KMSKS' region element. Lysine 596 is a binding site for ATP. Zn(2+) is bound by residues cysteine 889, cysteine 892, cysteine 911, and cysteine 914.

It belongs to the class-I aminoacyl-tRNA synthetase family. IleS type 1 subfamily. As to quaternary structure, monomer. It depends on Zn(2+) as a cofactor.

Its subcellular location is the cytoplasm. It catalyses the reaction tRNA(Ile) + L-isoleucine + ATP = L-isoleucyl-tRNA(Ile) + AMP + diphosphate. In terms of biological role, catalyzes the attachment of isoleucine to tRNA(Ile). As IleRS can inadvertently accommodate and process structurally similar amino acids such as valine, to avoid such errors it has two additional distinct tRNA(Ile)-dependent editing activities. One activity is designated as 'pretransfer' editing and involves the hydrolysis of activated Val-AMP. The other activity is designated 'posttransfer' editing and involves deacylation of mischarged Val-tRNA(Ile). The protein is Isoleucine--tRNA ligase of Lactococcus lactis subsp. lactis (strain IL1403) (Streptococcus lactis).